Consider the following 396-residue polypeptide: MIISAASDYRAAAQRTLPPFLFHYIDGGAYAEYTLRRNVEDLSQVALRQRVLKNMSDLSLETTLFNETLSMPVALAPVGLCGMYARRGEVQAAAAADAKGIPFTLSTVSVCPIEEVAPTIQRPMWFQLYVLRDRGFMRNALERAKAAGCSTLVFTVDMPTPGARYRDAHSGMSGPNAAMRRYWQAVMHPKWAWDVGLNGRPHDLGNISAYLGKPTGLEDYIGWLANNFDPSISWKDLEWIREFWDGPMVIKGILDPEDARDAVRFGADGIVVSNHGGRQLDGVLSSARALPAIADAVKGDIAILADSGIRNGLDVVRMIALGADTVLLGRAYLYALATAGKAGVANLLDLVEKEMKVAMTLTGAKSISEISGDSLVQELGKSLPAALAPMSKGDAA.

Positions 1–380 constitute an FMN hydroxy acid dehydrogenase domain; the sequence is MIISAASDYR…SGDSLVQELG (380 aa). Tyr-24 provides a ligand contact to substrate. FMN-binding residues include Ser-106 and Gln-127. Residue Tyr-129 participates in substrate binding. Thr-155 is a binding site for FMN. Residue Arg-164 coordinates substrate. Lys-251 contributes to the FMN binding site. His-275 (proton acceptor) is an active-site residue. Arg-278 serves as a coordination point for substrate. 306-330 lines the FMN pocket; the sequence is DSGIRNGLDVVRMIALGADTVLLGR.

It belongs to the FMN-dependent alpha-hydroxy acid dehydrogenase family. Requires FMN as cofactor.

The protein resides in the cell inner membrane. The catalysed reaction is (S)-lactate + A = pyruvate + AH2. Catalyzes the conversion of L-lactate to pyruvate. Is coupled to the respiratory chain. The chain is L-lactate dehydrogenase from Salmonella paratyphi A (strain ATCC 9150 / SARB42).